Consider the following 123-residue polypeptide: uncharacterized protein (123 aa).

Positions 31 to 57 (KLRTEAKKSKDKERTKEKEKHESLAKE) are enriched in basic and acidic residues. Residues 31–58 (KLRTEAKKSKDKERTKEKEKHESLAKEK) form a disordered region. The chain crosses the membrane as a helical span at residues 91–111 (IIIFLLILLVSGLMVGIFFGI).

The protein resides in the membrane. This is an uncharacterized protein from Mycoplasma genitalium (strain ATCC 33530 / DSM 19775 / NCTC 10195 / G37) (Mycoplasmoides genitalium).